The following is a 277-amino-acid chain: Eukaryotic translation initiation factor 3 subunit J (277 aa).

Residues 1 to 80 are disordered; that stretch reads MSWDDEDFAV…PAATKNTMLD (80 aa). Over residues 23-43 the composition is skewed to acidic residues; it reads WDDEFAENDDEPVLESWEDEE. Low complexity predominate over residues 50-75; sequence KAAAAAAAKAPKKASPSPAATPAATK. Residues 199 to 230 adopt a coiled-coil conformation; the sequence is TVENIRQTIATLNVLMKDKEREERQARLAKVK. The disordered stretch occupies residues 257–277; that stretch reads DNDFDLGGNDNFDDFGEDDFM. The span at 267–277 shows a compositional bias: acidic residues; that stretch reads NFDDFGEDDFM.

It belongs to the eIF-3 subunit J family. Component of the eukaryotic translation initiation factor 3 (eIF-3) complex.

Its subcellular location is the cytoplasm. Its function is as follows. Component of the eukaryotic translation initiation factor 3 (eIF-3) complex, which is involved in protein synthesis of a specialized repertoire of mRNAs and, together with other initiation factors, stimulates binding of mRNA and methionyl-tRNAi to the 40S ribosome. The eIF-3 complex specifically targets and initiates translation of a subset of mRNAs involved in cell proliferation. The polypeptide is Eukaryotic translation initiation factor 3 subunit J (Kluyveromyces lactis (strain ATCC 8585 / CBS 2359 / DSM 70799 / NBRC 1267 / NRRL Y-1140 / WM37) (Yeast)).